The primary structure comprises 96 residues: MKLRPLHDRVIVKRLEQETKTASGIVIPDNAAEKPDQGEVLAVGPGKRNDKGDFVALNVAVGDRVLFGKYSGQTVKVDGDELLVMREEDLFAVVGK.

The protein belongs to the GroES chaperonin family. As to quaternary structure, heptamer of 7 subunits arranged in a ring. Interacts with the chaperonin GroEL.

The protein resides in the cytoplasm. Together with the chaperonin GroEL, plays an essential role in assisting protein folding. The GroEL-GroES system forms a nano-cage that allows encapsulation of the non-native substrate proteins and provides a physical environment optimized to promote and accelerate protein folding. GroES binds to the apical surface of the GroEL ring, thereby capping the opening of the GroEL channel. In Leptothrix cholodnii (strain ATCC 51168 / LMG 8142 / SP-6) (Leptothrix discophora (strain SP-6)), this protein is Co-chaperonin GroES.